Consider the following 271-residue polypeptide: Phosphate import ATP-binding protein PstB (271 aa).

One can recognise an ABC transporter domain in the interval 13–266 (VRTAPVSEAE…PKHPYTEAYI (254 aa)). 57-64 (GPSGCGKS) serves as a coordination point for ATP.

It belongs to the ABC transporter superfamily. Phosphate importer (TC 3.A.1.7) family. The complex is composed of two ATP-binding proteins (PstB), two transmembrane proteins (PstC and PstA) and a solute-binding protein (PstS).

The protein localises to the cell inner membrane. The catalysed reaction is phosphate(out) + ATP + H2O = ADP + 2 phosphate(in) + H(+). In terms of biological role, part of the ABC transporter complex PstSACB involved in phosphate import. Responsible for energy coupling to the transport system. The sequence is that of Phosphate import ATP-binding protein PstB from Thermus thermophilus (strain ATCC 27634 / DSM 579 / HB8).